The sequence spans 349 residues: MKYSRVFINSLAYELAPVVVSSSELESRLAPLYQKFRIPMGQLAALTGITERRWWPKGHQLSDGAINAAHKAIAETGIDVAELGAVVYTGVCRDQHEPATACRIAAALGVSKDTAIYDISNACLGVLSGILDIANRIELGQIKAGMVVSCESARDIVDVTIDNMLADPTMQNFAQSLATLTGGSGAVAVILTDGSLPLTNVRKHQLLGASHLSAPQHHQLCQWGLQEVGHNIYREFMRTDAVTLLKEGVELAKHTWEHFLAQRNWLVEQVDKVICHQVGASNRKQVLSALNIPPEKEFPTYQLLGNMGTVSLPVTAAMAHDQGFLRPGDQVSFLGIGSGLNCMMLGIKW.

The active-site Proton acceptor is the Glu-97. Cys-123 (acyl-thioester intermediate) is an active-site residue.

The protein belongs to the thiolase-like superfamily. OleA family.

The enzyme catalyses a 1,2-saturated acyl-CoA + an acyl-CoA + H2O = an (R)-2-alkyl-3-oxoalkanoate + 2 CoA + H(+). In terms of biological role, involved in olefin biosynthesis. Catalyzes a non-decarboxylative head-to-head Claisen condensation of two acyl-CoA molecules, generating an (R)-2-alkyl-3-oxoalkanoate. The S.oneidensis oleABCD genes produce 3,6,9,12,15,19,22,25,28-hentriacontanonaene, which may aid the cells in adapting to a sudden drop in temperature. The chain is Acyl-CoA:acyl-CoA alkyltransferase from Shewanella oneidensis (strain ATCC 700550 / JCM 31522 / CIP 106686 / LMG 19005 / NCIMB 14063 / MR-1).